Reading from the N-terminus, the 272-residue chain is MDLYAVWGNPIAQSKSPLIQNKLAAQTHQTMEYIAKLGDLDAFEQQLLAFFEEGAKGCNITSPFKERAYQLADEYSQRAKLAEACNTLKKLDDGKLYADNTDGIGLVTDLQRLNWLRPNQHVLILGAGGATKGVLLPLLQAQQNIVLANRTFSKTKELAERFQPYGNIQAVSMDSIPLQTYDLVINATSAGLSGGTASVDAEILKLGSAFYDMQYAKGTDTPFIALCKSLGLTNVSDGFGMLVAQAAHSFHLWRGVMPDFVSVYEQLKKAML.

Shikimate is bound by residues 14–16 (SKS) and threonine 61. The active-site Proton acceptor is the lysine 65. Positions 86 and 102 each coordinate shikimate. NADP(+)-binding positions include 126–130 (GAGGA), 149–154 (NRTFSK), serine 189, and methionine 213. Tyrosine 215 serves as a coordination point for shikimate. Glycine 238 lines the NADP(+) pocket.

Belongs to the shikimate dehydrogenase family. In terms of assembly, homodimer.

It carries out the reaction shikimate + NADP(+) = 3-dehydroshikimate + NADPH + H(+). It participates in metabolic intermediate biosynthesis; chorismate biosynthesis; chorismate from D-erythrose 4-phosphate and phosphoenolpyruvate: step 4/7. Involved in the biosynthesis of the chorismate, which leads to the biosynthesis of aromatic amino acids. Catalyzes the reversible NADPH linked reduction of 3-dehydroshikimate (DHSA) to yield shikimate (SA). In Haemophilus influenzae (strain ATCC 51907 / DSM 11121 / KW20 / Rd), this protein is Shikimate dehydrogenase (NADP(+)).